Consider the following 408-residue polypeptide: LL-diaminopimelate aminotransferase (408 aa).

Substrate-binding residues include tyrosine 15 and glycine 42. Pyridoxal 5'-phosphate contacts are provided by residues tyrosine 72, 108-109 (SK), tyrosine 132, asparagine 187, tyrosine 218, and 246-248 (SFS). Substrate-binding residues include lysine 109, tyrosine 132, and asparagine 187. Lysine 249 is modified (N6-(pyridoxal phosphate)lysine). 2 residues coordinate pyridoxal 5'-phosphate: arginine 257 and asparagine 292. Substrate is bound by residues asparagine 292 and arginine 388.

It belongs to the class-I pyridoxal-phosphate-dependent aminotransferase family. LL-diaminopimelate aminotransferase subfamily. Homodimer. Requires pyridoxal 5'-phosphate as cofactor.

It carries out the reaction (2S,6S)-2,6-diaminopimelate + 2-oxoglutarate = (S)-2,3,4,5-tetrahydrodipicolinate + L-glutamate + H2O + H(+). The protein operates within amino-acid biosynthesis; L-lysine biosynthesis via DAP pathway; LL-2,6-diaminopimelate from (S)-tetrahydrodipicolinate (aminotransferase route): step 1/1. Its function is as follows. Involved in the synthesis of meso-diaminopimelate (m-DAP or DL-DAP), required for both lysine and peptidoglycan biosynthesis. Catalyzes the direct conversion of tetrahydrodipicolinate to LL-diaminopimelate. In Parasynechococcus marenigrum (strain WH8102), this protein is LL-diaminopimelate aminotransferase.